An 84-amino-acid chain; its full sequence is Small ribosomal subunit protein uS17 (84 aa).

This sequence belongs to the universal ribosomal protein uS17 family. Part of the 30S ribosomal subunit.

In terms of biological role, one of the primary rRNA binding proteins, it binds specifically to the 5'-end of 16S ribosomal RNA. This chain is Small ribosomal subunit protein uS17, found in Borreliella afzelii (strain PKo) (Borrelia afzelii).